A 344-amino-acid chain; its full sequence is Heat-inducible transcription repressor HrcA (344 aa).

This sequence belongs to the HrcA family.

In terms of biological role, negative regulator of class I heat shock genes (grpE-dnaK-dnaJ and groELS operons). Prevents heat-shock induction of these operons. The chain is Heat-inducible transcription repressor HrcA from Streptococcus pneumoniae serotype 19F (strain G54).